A 403-amino-acid polypeptide reads, in one-letter code: Dual-specificity RNA methyltransferase RlmN (403 aa).

The segment at 1–25 is disordered; that stretch reads MTKIPMQPADSTPATFHPNAPTKTN. E112 serves as the catalytic Proton acceptor. Positions 123–364 constitute a Radical SAM core domain; it reads VNGRKTLCIS…VCTIRQTRGD (242 aa). A disulfide bridge connects residues C130 and C370. Residues C137, C141, and C144 each coordinate [4Fe-4S] cluster. Residues 193–194, S225, 247–249, and N327 contribute to the S-adenosyl-L-methionine site; these read GE and SLH. C370 (S-methylcysteine intermediate) is an active-site residue.

Belongs to the radical SAM superfamily. RlmN family. [4Fe-4S] cluster serves as cofactor.

It is found in the cytoplasm. The enzyme catalyses adenosine(2503) in 23S rRNA + 2 reduced [2Fe-2S]-[ferredoxin] + 2 S-adenosyl-L-methionine = 2-methyladenosine(2503) in 23S rRNA + 5'-deoxyadenosine + L-methionine + 2 oxidized [2Fe-2S]-[ferredoxin] + S-adenosyl-L-homocysteine. It carries out the reaction adenosine(37) in tRNA + 2 reduced [2Fe-2S]-[ferredoxin] + 2 S-adenosyl-L-methionine = 2-methyladenosine(37) in tRNA + 5'-deoxyadenosine + L-methionine + 2 oxidized [2Fe-2S]-[ferredoxin] + S-adenosyl-L-homocysteine. In terms of biological role, specifically methylates position 2 of adenine 2503 in 23S rRNA and position 2 of adenine 37 in tRNAs. m2A2503 modification seems to play a crucial role in the proofreading step occurring at the peptidyl transferase center and thus would serve to optimize ribosomal fidelity. This Psychrobacter sp. (strain PRwf-1) protein is Dual-specificity RNA methyltransferase RlmN.